A 274-amino-acid chain; its full sequence is 4-diphosphocytidyl-2-C-methyl-D-erythritol kinase (274 aa).

Lysine 14 is an active-site residue. 94 to 104 (PMQAGLGGGSS) provides a ligand contact to ATP. Residue aspartate 134 is part of the active site.

It belongs to the GHMP kinase family. IspE subfamily.

The catalysed reaction is 4-CDP-2-C-methyl-D-erythritol + ATP = 4-CDP-2-C-methyl-D-erythritol 2-phosphate + ADP + H(+). It participates in isoprenoid biosynthesis; isopentenyl diphosphate biosynthesis via DXP pathway; isopentenyl diphosphate from 1-deoxy-D-xylulose 5-phosphate: step 3/6. In terms of biological role, catalyzes the phosphorylation of the position 2 hydroxy group of 4-diphosphocytidyl-2C-methyl-D-erythritol. The protein is 4-diphosphocytidyl-2-C-methyl-D-erythritol kinase of Thermosipho melanesiensis (strain DSM 12029 / CIP 104789 / BI429).